We begin with the raw amino-acid sequence, 600 residues long: ATP-dependent lipid A-core flippase (600 aa).

A run of 4 helical transmembrane segments spans residues 26–46, 82–102, 167–187, and 266–286; these read VGIF…QPML, LLIV…NYFL, VFLF…MLAI, and PMLQ…VLFL. One can recognise an ABC transmembrane type-1 domain in the interval 30 to 321; it reads LLSIIGFVIF…LSEVSSTIQK (292 aa). Residues 353 to 589 enclose the ABC transporter domain; the sequence is LEVKNLSFFY…NGYYARLHAM (237 aa). ATP is bound at residue 387-394; the sequence is GRSGSGKS.

The protein belongs to the ABC transporter superfamily. Lipid exporter (TC 3.A.1.106) family. As to quaternary structure, homodimer.

It is found in the cell inner membrane. It catalyses the reaction ATP + H2O + lipid A-core oligosaccharideSide 1 = ADP + phosphate + lipid A-core oligosaccharideSide 2.. In terms of biological role, involved in lipopolysaccharide (LPS) biosynthesis. Translocates lipid A-core from the inner to the outer leaflet of the inner membrane. Transmembrane domains (TMD) form a pore in the inner membrane and the ATP-binding domain (NBD) is responsible for energy generation. The sequence is that of ATP-dependent lipid A-core flippase from Pseudomonas syringae pv. syringae (strain B728a).